A 65-amino-acid chain; its full sequence is Conotoxin Cal16.1 (65 aa).

The signal sequence occupies residues 1–19 (MRCLSIFVLLVLLVSFAVA). Residues 20-48 (ELDVEGEIVKQLLTRGTLKDADFWKRLEM) constitute a propeptide that is removed on maturation. A Pyrrolidone carboxylic acid modification is found at Gln-49. Intrachain disulfides connect Cys-51-Cys-60 and Cys-53-Cys-61. Glu-63 carries the post-translational modification Glutamic acid 1-amide.

Expressed by the venom duct.

It localises to the secreted. Functionally, probable neurotoxin with unknown target. Possibly targets ion channels. This chain is Conotoxin Cal16.1, found in Californiconus californicus (California cone).